The following is a 237-amino-acid chain: Arginine-binding periplasmic protein (237 aa).

Positions M1–A18 are cleaved as a signal peptide.

The protein belongs to the bacterial solute-binding protein 3 family.

Its subcellular location is the periplasm. Functionally, binds arginine; part of the arginine periplasmic transport system. This Mannheimia haemolytica (Pasteurella haemolytica) protein is Arginine-binding periplasmic protein (lapT).